The sequence spans 99 residues: Aspartyl/glutamyl-tRNA(Asn/Gln) amidotransferase subunit C (99 aa).

Belongs to the GatC family. As to quaternary structure, heterotrimer of A, B and C subunits.

It carries out the reaction L-glutamyl-tRNA(Gln) + L-glutamine + ATP + H2O = L-glutaminyl-tRNA(Gln) + L-glutamate + ADP + phosphate + H(+). The catalysed reaction is L-aspartyl-tRNA(Asn) + L-glutamine + ATP + H2O = L-asparaginyl-tRNA(Asn) + L-glutamate + ADP + phosphate + 2 H(+). Allows the formation of correctly charged Asn-tRNA(Asn) or Gln-tRNA(Gln) through the transamidation of misacylated Asp-tRNA(Asn) or Glu-tRNA(Gln) in organisms which lack either or both of asparaginyl-tRNA or glutaminyl-tRNA synthetases. The reaction takes place in the presence of glutamine and ATP through an activated phospho-Asp-tRNA(Asn) or phospho-Glu-tRNA(Gln). The polypeptide is Aspartyl/glutamyl-tRNA(Asn/Gln) amidotransferase subunit C (Thermobifida fusca (strain YX)).